The sequence spans 543 residues: NADH-ubiquinone oxidoreductase chain 4 (543 aa).

The next 14 membrane-spanning stretches (helical) occupy residues 5 to 25 (FLMF…IIWS), 84 to 104 (VVAF…YILF), 129 to 149 (VDGI…IALM), 161 to 181 (SYLI…LVLD), 182 to 202 (ILLF…LIGL), 213 to 233 (FYIF…ILTM), 254 to 274 (IQIF…PTIF), 287 to 307 (PLGG…YGIF), 321 to 341 (YTYI…FSTL), 350 to 370 (IAYS…SNTI), 377 to 397 (ILLG…VGGV), 416 to 436 (MAPL…GVPL), 456 to 476 (LLGL…IFLF), and 501 to 521 (FYAL…PSII).

It belongs to the complex I subunit 4 family.

Its subcellular location is the mitochondrion membrane. It catalyses the reaction a ubiquinone + NADH + 5 H(+)(in) = a ubiquinol + NAD(+) + 4 H(+)(out). In terms of biological role, core subunit of the mitochondrial membrane respiratory chain NADH dehydrogenase (Complex I) that is believed to belong to the minimal assembly required for catalysis. Complex I functions in the transfer of electrons from NADH to the respiratory chain. The immediate electron acceptor for the enzyme is believed to be ubiquinone. This is NADH-ubiquinone oxidoreductase chain 4 (ndh-4) from Neurospora crassa (strain ATCC 24698 / 74-OR23-1A / CBS 708.71 / DSM 1257 / FGSC 987).